A 255-amino-acid polypeptide reads, in one-letter code: MRHPLVMGNWKLNGSRHMVNELVANLRTELAGVSGCAVAIAPPEMYLDLAKRAAEGSHIHLGAQNVDVNLSGAFTGETSAEMLKDIGAQYIIIGHSERRTYHKESDELIAKKFAVLKEQGLTPVLCIGETEAENEAGKTEEVCARQIDAVLKTQGAAVFEGVVIAYEPVWAIGTGKSATPAQAQAVHKFIRDHIAKADAKIAEQVIIQYGGSVNAGNAAELFTQPDIDGALVGGASLKADAFAVIVKAAEAAKKA.

A substrate-binding site is contributed by 9–11 (NWK). Catalysis depends on histidine 95, which acts as the Electrophile. Glutamate 167 acts as the Proton acceptor in catalysis. Substrate is bound by residues glycine 173, serine 212, and 233-234 (GG).

The protein belongs to the triosephosphate isomerase family. In terms of assembly, homodimer.

The protein resides in the cytoplasm. It carries out the reaction D-glyceraldehyde 3-phosphate = dihydroxyacetone phosphate. It participates in carbohydrate biosynthesis; gluconeogenesis. Its pathway is carbohydrate degradation; glycolysis; D-glyceraldehyde 3-phosphate from glycerone phosphate: step 1/1. Functionally, involved in the gluconeogenesis. Catalyzes stereospecifically the conversion of dihydroxyacetone phosphate (DHAP) to D-glyceraldehyde-3-phosphate (G3P). The protein is Triosephosphate isomerase of Klebsiella pneumoniae.